Here is a 1192-residue protein sequence, read N- to C-terminus: MGKKVHNAKARQNPQTIVDNSAVKKIQIDVDAVAGGNQVGYDEANALVLPSEKRATKIKVDKVQHVKILSKKQRKHLQAIVDKKKKKEGRAQLLGDLAAVQIPEEELQQYTSISQVQTVGLKRLPTLDEYLAKKKERQAQVLAEKSSASGLRVNAIKGSKRKLLVEEEEELQAKRKNPNVISVEEDDEDSSSSDEDDEEAPAQSAPIAIPTPVSIAPPQIAVKPPIKKLKPEPNPPACIHQTVYVPVHRTTEVQNARLRLPILAEEQQVMETINENPIVIVAGETGSGKTTQLPQFLYEAGYAQHKMIGVTEPRRVAAIAMSKRVAHEMNLPESEVSYLIRFEGNVTPATRIKFMTDGVLLKEIETDFLLSKYSVIILDEAHERSVYTDILVGLLSRIVPLRHKRGQPLKLIIMSATLRVSDFTENTRLFKIPPPLLKVEARQFPVTIHFQKRTPDDYVAEAYRKTLKIHNKLPEGGILIFVTGQQEVNQLVRKLRRTFPYHHAPTKDVAKNGKVSEEEKEETIDDAASTVEDPKELEFDMKRVIRNIRKSKKKFLAQMALPKINLDDYKLPGDDTEADMHEQPDEDDEQEGLEEDNDDELGLEDESGMGSGQRQPLWVLPLYSLLSSEKQNRIFLPVPDGCRLCVVSTNVAETSLTIPHIKYVVDCGRQKTRLYDKLTGVSAFVVTYTSKASADQRAGRAGRISAGHCYRLYSSAVYNDCFEDFSQPDIQKKPVEDLMLQMRCMGIDRVVHFPFPSPPDQVQLQAAERRLIVLGALEVAKTENTDLPPAVTRLGHVISRFPVAPRFGKMLALSHQQNLLPYTVCLVAALSVQEVLIETGVQRDEDVAPGANRFHRKRQSWAASGNYQLLGDPMVLLRAVGAAEYAGSQGRLPEFCAANGLRQKAMSEVRKLRVQLTNEINLNVSDVELGVDPELKPPTDAQARFLRQILLAGMGDRVARKVPLADIADKEERRRLKYAYNCADMEEPAFLHVSSVLRQKAPEWVIYQEAYELQNGDSTKMFIRGITAIEPEWLLLYVPLLCNIREVREDPAPRFDKTSGKIFCHVDATFGKSGWELPLGEVEMPLSEKACCYFGMFLLDGEVCSRLADFRSKLKSTPASVIKSWSSMNNKVLRFKRALITKQIHNRQALIDQWNSDPHFLLEEYQNLLYDVALSELTPLWPPVDKKEPQRQ.

The interval 170–214 (ELQAKRKNPNVISVEEDDEDSSSSDEDDEEAPAQSAPIAIPTPVS) is disordered. Acidic residues predominate over residues 183–200 (VEEDDEDSSSSDEDDEEA). The region spanning 270–436 (METINENPIV…TRLFKIPPPL (167 aa)) is the Helicase ATP-binding domain. 283–290 (GETGSGKT) contacts ATP. The DEAH box motif lies at 379 to 382 (DEAH). The disordered stretch occupies residues 504–529 (APTKDVAKNGKVSEEEKEETIDDAAS). Residues 505–517 (PTKDVAKNGKVSE) show a composition bias toward basic and acidic residues. At Ser529 the chain carries Phosphoserine. Thr530 carries the phosphothreonine modification. The Helicase C-terminal domain occupies 540–746 (DMKRVIRNIR…DLMLQMRCMG (207 aa)). Basic and acidic residues predominate over residues 567-583 (DDYKLPGDDTEADMHEQ). The disordered stretch occupies residues 567–612 (DDYKLPGDDTEADMHEQPDEDDEQEGLEEDNDDELGLEDESGMGSG). The segment covering 584–607 (PDEDDEQEGLEEDNDDELGLEDES) has biased composition (acidic residues).

The protein belongs to the DEAD box helicase family. DEAH subfamily.

It catalyses the reaction ATP + H2O = ADP + phosphate + H(+). The protein is Probable ATP-dependent RNA helicase kurz (kz) of Drosophila melanogaster (Fruit fly).